We begin with the raw amino-acid sequence, 295 residues long: Phosphate transport system permease protein PstA (295 aa).

A run of 6 helical transmembrane segments spans residues 29-49 (IALVLSMATMLFGLFWLIWIL), 88-108 (LLILWATVIGTPLGIMAGIYL), 126-146 (DILLSAPSIVVGLFVYTIVVA), 149-169 (EHFSGWAGVIALALLQVPIVI), 198-218 (ISAITLKASVSGILTGILLAI), and 266-286 (NLAWAGVLLITLCVLLLNILA). In terms of domain architecture, ABC transmembrane type-1 spans 83 to 286 (IAGSGLLILW…LCVLLLNILA (204 aa)).

Belongs to the binding-protein-dependent transport system permease family. CysTW subfamily.

It is found in the cell inner membrane. Functionally, part of a binding-protein-dependent transport system for phosphate; probably responsible for the translocation of the substrate across the membrane. The chain is Phosphate transport system permease protein PstA (pstA) from Yersinia pestis.